We begin with the raw amino-acid sequence, 403 residues long: uncharacterized protein (403 aa).

Position 81 (His-81) interacts with Zn(2+). Residue Asp-83 is part of the active site. Position 114 (Asp-114) interacts with Zn(2+). Residue Glu-148 is the Proton acceptor of the active site. Zn(2+)-binding residues include Glu-149, Glu-174, and His-374.

The protein belongs to the peptidase M20A family. Zn(2+) is required as a cofactor. It depends on Co(2+) as a cofactor.

This is an uncharacterized protein from Escherichia coli O157:H7.